We begin with the raw amino-acid sequence, 372 residues long: Chaperone protein DnaJ (372 aa).

Residues 5-69 (DYYEVLGLTK…QKKARYDQFG (65 aa)) enclose the J domain. The segment at 129–211 (GKETEIEIPK…CRGEGKVQKR (83 aa)) adopts a CR-type zinc-finger fold. Zn(2+)-binding residues include Cys-142, Cys-145, Cys-159, Cys-162, Cys-185, Cys-188, Cys-199, and Cys-202. 4 CXXCXGXG motif repeats span residues 142 to 149 (CETCHGSG), 159 to 166 (CSTCNGAG), 185 to 192 (CTTCHGTG), and 199 to 206 (CSTCRGEG).

The protein belongs to the DnaJ family. Homodimer. Zn(2+) is required as a cofactor.

It is found in the cytoplasm. Its function is as follows. Participates actively in the response to hyperosmotic and heat shock by preventing the aggregation of stress-denatured proteins and by disaggregating proteins, also in an autonomous, DnaK-independent fashion. Unfolded proteins bind initially to DnaJ; upon interaction with the DnaJ-bound protein, DnaK hydrolyzes its bound ATP, resulting in the formation of a stable complex. GrpE releases ADP from DnaK; ATP binding to DnaK triggers the release of the substrate protein, thus completing the reaction cycle. Several rounds of ATP-dependent interactions between DnaJ, DnaK and GrpE are required for fully efficient folding. Also involved, together with DnaK and GrpE, in the DNA replication of plasmids through activation of initiation proteins. This is Chaperone protein DnaJ from Lysinibacillus sphaericus (strain C3-41).